The sequence spans 833 residues: F1 capsule-anchoring protein (833 aa).

An N-terminal signal peptide occupies residues 1 to 25 (MRYSKLFLCAGLTLATLPCWGRAYT). An intrachain disulfide couples Cys-807 to Cys-829.

This sequence belongs to the fimbrial export usher family.

It is found in the cell outer membrane. A probable role in capsular biogenesis. It is likely that the caf1A molecule binds F1 antigen subunits during the extracellular secretion process. The protein is F1 capsule-anchoring protein (caf1A) of Yersinia pestis.